A 237-amino-acid polypeptide reads, in one-letter code: Cysteine-rich venom protein DIS2 (237 aa).

The first 18 residues, Met-1 to Gly-18, serve as a signal peptide directing secretion. An SCP domain is found at Val-37–Tyr-165. 7 disulfides stabilise this stretch: Cys-74/Cys-152, Cys-91/Cys-166, Cys-147/Cys-163, Cys-185/Cys-192, Cys-188/Cys-197, Cys-201/Cys-234, and Cys-219/Cys-232. The region spanning Cys-201–Cys-234 is the ShKT domain.

Belongs to the CRISP family. In terms of tissue distribution, expressed by the venom gland.

It is found in the secreted. Functionally, weakly blocks contraction of smooth muscle elicited by high potassium-induced depolarization, but does not block caffeine-stimulated contraction. May target voltage-gated calcium channels on smooth muscle. The protein is Cysteine-rich venom protein DIS2 of Dispholidus typus (Boomslang).